The following is a 63-amino-acid chain: Sec-independent protein translocase protein TatA (63 aa).

The helical transmembrane segment at 1–21 (MGGLSVGSVVLIALVALLIFG) threads the bilayer.

The protein belongs to the TatA/E family. Forms a complex with TatC.

It is found in the cell membrane. Functionally, part of the twin-arginine translocation (Tat) system that transports large folded proteins containing a characteristic twin-arginine motif in their signal peptide across membranes. TatA could form the protein-conducting channel of the Tat system. The polypeptide is Sec-independent protein translocase protein TatA (Shouchella clausii (strain KSM-K16) (Alkalihalobacillus clausii)).